Reading from the N-terminus, the 623-residue chain is Fanconi anemia group G protein homolog (623 aa).

TPR repeat units lie at residues 251–284 (VQVY…GTTC), 349–382 (SQAK…LLGG), 458–491 (SATH…LFRT), and 517–550 (VAAL…CPGN).

As to quaternary structure, belongs to the multisubunit FA complex composed of FANCA, FANCB, FANCC, FANCE, FANCF, FANCG, FANCL/PHF9 and FANCM. In complex with FANCF, FANCA and FANCL, but not with FANCC, nor FANCE, interacts with HES1; this interaction may be essential for the stability and nuclear localization of FA core complex proteins. The complex with FANCC and FANCG may also include EIF2AK2 and HSP70. In terms of tissue distribution, highest expression levels in spleen, thymus and testis.

It localises to the nucleus. Its function is as follows. DNA repair protein that may operate in a postreplication repair or a cell cycle checkpoint function. May be implicated in interstrand DNA cross-link repair and in the maintenance of normal chromosome stability. Candidate tumor suppressor gene. This Mus musculus (Mouse) protein is Fanconi anemia group G protein homolog (Fancg).